A 288-amino-acid polypeptide reads, in one-letter code: Transmembrane and coiled-coil domain-containing protein 5A (288 aa).

Residues 10-189 (KKNIISLNMD…ELETGYLERE (180 aa)) are a coiled coil. The chain crosses the membrane as a helical span at residues 227-249 (SLLFSTLFFIRLLGYLIFHLSFI).

It belongs to the TMCO5 family. In terms of tissue distribution, only detected in testis (at protein level).

The protein resides in the endoplasmic reticulum membrane. It localises to the nucleus membrane. This Mus musculus (Mouse) protein is Transmembrane and coiled-coil domain-containing protein 5A (Tmco5a).